A 1084-amino-acid chain; its full sequence is Putative tRNA-specific 2-thiouridylase (1084 aa).

Helical transmembrane passes span 1-21 (MLIF…FILT), 32-52 (FIIS…FYVI), and 309-329 (IITI…YLIL). The active-site Nucleophile is Cys538. A disulfide bond links Cys538 and Cys715. The active-site Cysteine persulfide intermediate is Cys715.

It belongs to the MnmA/TRMU family.

It localises to the plastid. The protein localises to the apicoplast. Its subcellular location is the membrane. It catalyses the reaction S-sulfanyl-L-cysteinyl-[protein] + uridine(34) in tRNA + AH2 + ATP = 2-thiouridine(34) in tRNA + L-cysteinyl-[protein] + A + AMP + diphosphate + H(+). Catalyzes the 2-thiolation of uridine at the wobble position (U34) of tRNA, leading to the formation of s(2)U34. Required for apicoplast maintenance. This Plasmodium falciparum (isolate 3D7) protein is Putative tRNA-specific 2-thiouridylase.